The following is a 169-amino-acid chain: Putative phosphoesterase SACOL1020 (169 aa).

His-34 functions as the Proton donor in the catalytic mechanism. 2 consecutive short sequence motifs (HXTX) follow at residues 34 to 37 and 115 to 118; these read HVTI and HFTI. Catalysis depends on His-115, which acts as the Proton acceptor.

Belongs to the 2H phosphoesterase superfamily. YjcG family.

This chain is Putative phosphoesterase SACOL1020, found in Staphylococcus aureus (strain COL).